A 558-amino-acid polypeptide reads, in one-letter code: Dimethylaniline monooxygenase [N-oxide-forming] 4 (558 aa).

FAD is bound by residues 9–13 (GAGVS), Glu32, and 40–41 (LW). NADP(+)-binding positions include 60-61 (TN) and 195-198 (TGGD). The chain crosses the membrane as a helical span at residues 517-537 (AWGAPVLLASLLLICKSSLFL).

This sequence belongs to the FMO family. FAD is required as a cofactor. As to expression, liver.

It localises to the microsome membrane. Its subcellular location is the endoplasmic reticulum membrane. It catalyses the reaction N,N-dimethylaniline + NADPH + O2 + H(+) = N,N-dimethylaniline N-oxide + NADP(+) + H2O. Its function is as follows. This protein is involved in the oxidative metabolism of a variety of xenobiotics such as drugs and pesticides. The polypeptide is Dimethylaniline monooxygenase [N-oxide-forming] 4 (FMO4) (Homo sapiens (Human)).